A 287-amino-acid chain; its full sequence is Prohibitin-1 (287 aa).

Residues 102-116 (VLQLPAIYQNLGLDY) are interaction with ATG8. Positions 109 to 112 (YQNL) match the AIM motif. Residues 180-224 (EFTKAVEQKQIAQQDAERAKFLVEKAEQERQASVIRAEGEAESAE) adopt a coiled-coil conformation. Positions 264–287 (SQHSGGGNSESSGSPNSLLLNIGR) are disordered. A compositionally biased stretch (low complexity) spans 272 to 287 (SESSGSPNSLLLNIGR).

The protein belongs to the prohibitin family. The mitochondrial prohibitin complex consists of two subunits (PHB1 and PHB2). The subunits assemble into a membrane-associated ring-shaped supercomplex of approximately 1 mDa. The mitochondrial prohibitin complex interacts with the m-AAA protease, a heterohexamer composed of YTA12/RCA1 and YTA10/AFG3. The mitochondrial prohibitin complex interacts with ATG8 and the interaction may support mitophagosome assembly. The N-terminus is blocked.

Its subcellular location is the mitochondrion inner membrane. Prohibitin probably acts as a holdase/unfoldase for the stabilization of newly synthesized mitochondrial proteins. Involved in mitophagy; may act as an adapter for ATG8 that supports mitophagosome assembly. Negatively regulates the proteolytic processing of ATG32 via the i-AAA protease. Acts as a negative regulator of the m-AAA protease. In Saccharomyces cerevisiae (strain ATCC 204508 / S288c) (Baker's yeast), this protein is Prohibitin-1 (PHB1).